The primary structure comprises 931 residues: Phosphoenolpyruvate carboxylase (931 aa).

Active-site residues include H158 and K593.

Belongs to the PEPCase type 1 family. The cofactor is Mg(2+).

It carries out the reaction oxaloacetate + phosphate = phosphoenolpyruvate + hydrogencarbonate. Functionally, forms oxaloacetate, a four-carbon dicarboxylic acid source for the tricarboxylic acid cycle. The chain is Phosphoenolpyruvate carboxylase from Azorhizobium caulinodans (strain ATCC 43989 / DSM 5975 / JCM 20966 / LMG 6465 / NBRC 14845 / NCIMB 13405 / ORS 571).